Here is a 477-residue protein sequence, read N- to C-terminus: UDP-N-acetylmuramate--L-alanine ligase (477 aa).

Residue 112 to 118 (GAHGKTT) participates in ATP binding.

Belongs to the MurCDEF family.

It is found in the cytoplasm. The catalysed reaction is UDP-N-acetyl-alpha-D-muramate + L-alanine + ATP = UDP-N-acetyl-alpha-D-muramoyl-L-alanine + ADP + phosphate + H(+). It functions in the pathway cell wall biogenesis; peptidoglycan biosynthesis. In terms of biological role, cell wall formation. In Acidovorax ebreus (strain TPSY) (Diaphorobacter sp. (strain TPSY)), this protein is UDP-N-acetylmuramate--L-alanine ligase.